The chain runs to 117 residues: Large ribosomal subunit protein eL30B (117 aa).

Over residues 1–14 (MSAAPTTAPVAAVS) the composition is skewed to low complexity. Residues 1 to 22 (MSAAPTTAPVAAVSKKGKKSGD) form a disordered region.

The protein belongs to the eukaryotic ribosomal protein eL30 family. Component of the large ribosomal subunit (LSU). Mature yeast ribosomes consist of a small (40S) and a large (60S) subunit. The 40S small subunit contains 1 molecule of ribosomal RNA (18S rRNA) and at least 33 different proteins. The large 60S subunit contains 3 rRNA molecules (25S, 5.8S and 5S rRNA) and at least 46 different proteins.

The protein resides in the cytoplasm. Component of the ribosome, a large ribonucleoprotein complex responsible for the synthesis of proteins in the cell. The small ribosomal subunit (SSU) binds messenger RNAs (mRNAs) and translates the encoded message by selecting cognate aminoacyl-transfer RNA (tRNA) molecules. The large subunit (LSU) contains the ribosomal catalytic site termed the peptidyl transferase center (PTC), which catalyzes the formation of peptide bonds, thereby polymerizing the amino acids delivered by tRNAs into a polypeptide chain. The nascent polypeptides leave the ribosome through a tunnel in the LSU and interact with protein factors that function in enzymatic processing, targeting, and the membrane insertion of nascent chains at the exit of the ribosomal tunnel. The protein is Large ribosomal subunit protein eL30B (rpl3002) of Schizosaccharomyces pombe (strain 972 / ATCC 24843) (Fission yeast).